The following is a 47-amino-acid chain: Fasciclin-like arabinogalactan protein (47 aa).

The FAS1 domain maps to A1–R47.

This sequence belongs to the fasciclin-like AGP family.

Functionally, may be a cell surface adhesion protein. This Jatropha curcas (Barbados nut) protein is Fasciclin-like arabinogalactan protein.